A 501-amino-acid chain; its full sequence is Cytochrome P450 monooxygenase notH (501 aa).

A helical membrane pass occupies residues 11 to 31; that stretch reads LGLESVGWVLGLLTTSILYLF. A glycan (N-linked (GlcNAc...) asparagine) is linked at N298. C442 contacts heme.

This sequence belongs to the cytochrome P450 family. Heme serves as cofactor.

The protein resides in the membrane. Its pathway is alkaloid biosynthesis. Cytochrome P450 monooxygenase; part of the gene cluster that mediates the biosynthesis of notoamide, a fungal indole alkaloid that belongs to a family of natural products containing a characteristic bicyclo[2.2.2]diazaoctane core. The first step of notoamide biosynthesis involves coupling of L-proline and L-tryptophan by the bimodular NRPS notE, to produce cyclo-L-tryptophan-L-proline called brevianamide F. The reverse prenyltransferase notF then acts as a deoxybrevianamide E synthase and converts brevianamide F to deoxybrevianamide E via reverse prenylation at C-2 of the indole ring leading to the bicyclo[2.2.2]diazaoctane core. Deoxybrevianamide E is further hydroxylated at C-6 of the indole ring, likely catalyzed by the cytochrome P450 monooxygenase notG, to yield 6-hydroxy-deoxybrevianamide E. 6-hydroxy-deoxybrevianamide E is a specific substrate of the prenyltransferase notC for normal prenylation at C-7 to produce 6-hydroxy-7-prenyl-deoxybrevianamide, also called notoamide S. As the proposed pivotal branching point in notoamide biosynthesis, notoamide S can be diverted to notoamide E through an oxidative pyran ring closure putatively catalyzed by either notH cytochrome P450 monooxygenase or the notD FAD-linked oxidoreductase. This step would be followed by an indole 2,3-epoxidation-initiated pinacol-like rearrangement catalyzed by the notB FAD-dependent monooxygenase leading to the formation of notoamide C and notoamide D. On the other hand notoamide S is converted to notoamide T by notH (or notD), a bifunctional oxidase that also functions as the intramolecular Diels-Alderase responsible for generation of (+)-notoamide T. To generate antipodal (-)-notoaminide T, notH' (or notD') in Aspergillus versicolor is expected to catalyze a Diels-Alder reaction leading to the opposite stereochemistry. The remaining oxidoreductase notD (or notH) likely catalyzes the oxidative pyran ring formation to yield (+)-stephacidin A. The FAD-dependent monooxygenase notI is highly similar to notB and is predicted to catalyze a similar conversion from (+)-stephacidin A to (-)-notoamide B via the 2,3-epoxidation of (+)-stephacidin A followed by a pinacol-type rearrangement. Finally, it remains unclear which enzyme could be responsible for the final hydroxylation steps leading to notoamide A and sclerotiamide. The protein is Cytochrome P450 monooxygenase notH of Aspergillus sp. (strain MF297-2).